The sequence spans 318 residues: Ribosomal RNA small subunit methyltransferase A (318 aa).

Asn-40, Val-42, Gly-67, Glu-88, Asp-118, and Asn-137 together coordinate S-adenosyl-L-methionine. A compositionally biased stretch (basic and acidic residues) spans 296 to 305 (ADRGGSDREG). Residues 296 to 318 (ADRGGSDREGTSPPTAGQGAPAC) are disordered.

The protein belongs to the class I-like SAM-binding methyltransferase superfamily. rRNA adenine N(6)-methyltransferase family. RsmA subfamily.

It localises to the cytoplasm. It catalyses the reaction adenosine(1518)/adenosine(1519) in 16S rRNA + 4 S-adenosyl-L-methionine = N(6)-dimethyladenosine(1518)/N(6)-dimethyladenosine(1519) in 16S rRNA + 4 S-adenosyl-L-homocysteine + 4 H(+). Functionally, specifically dimethylates two adjacent adenosines (A1518 and A1519) in the loop of a conserved hairpin near the 3'-end of 16S rRNA in the 30S particle. May play a critical role in biogenesis of 30S subunits. The sequence is that of Ribosomal RNA small subunit methyltransferase A from Mycobacterium avium (strain 104).